Here is a 449-residue protein sequence, read N- to C-terminus: UDP-N-acetylmuramoylalanine--D-glutamate ligase (449 aa).

111–117 contacts ATP; it reads GTNGKST.

Belongs to the MurCDEF family.

The protein resides in the cytoplasm. The enzyme catalyses UDP-N-acetyl-alpha-D-muramoyl-L-alanine + D-glutamate + ATP = UDP-N-acetyl-alpha-D-muramoyl-L-alanyl-D-glutamate + ADP + phosphate + H(+). Its pathway is cell wall biogenesis; peptidoglycan biosynthesis. Its function is as follows. Cell wall formation. Catalyzes the addition of glutamate to the nucleotide precursor UDP-N-acetylmuramoyl-L-alanine (UMA). The protein is UDP-N-acetylmuramoylalanine--D-glutamate ligase of Rickettsia felis (strain ATCC VR-1525 / URRWXCal2) (Rickettsia azadi).